Here is a 142-residue protein sequence, read N- to C-terminus: Small ribosomal subunit protein uS9c (142 aa).

Belongs to the universal ribosomal protein uS9 family.

The protein localises to the plastid. It localises to the chloroplast. The sequence is that of Small ribosomal subunit protein uS9c (rps9) from Stigeoclonium helveticum (Green alga).